The sequence spans 249 residues: Receptor-recognizing protein gp38 (249 aa).

10 short sequence motifs (GRM) span residues 114–121, 124–131, 151–161, 164–172, 175–181, 184–190, 192–199, 204–210, 213–218, and 222–229; these read GRGGTGGV, LGGNPGGD, GGGGGGGGFRV, TEAGGGGGR, GAGGVSS, LNGDNAT, GAPGRGYQ, YAGNGGD, NPGSAS, and MGGGAAGR.

The protein belongs to the S16-like receptor-recognizing protein gp38 family. Interacts with host OmpC receptor; this interaction allows the reversible adsorption of the phage on the host membrane.

It localises to the virion. In terms of biological role, receptor binding protein (RBP) that is at the tip of the long tail fibers and serves as the phage recognition site for the attachment host receptor OmpC. This chain is Receptor-recognizing protein gp38, found in Salmonella enterica (Salmonella choleraesuis).